A 383-amino-acid polypeptide reads, in one-letter code: 8-amino-7-oxononanoate synthase (383 aa).

Arg20 is a binding site for substrate. Pyridoxal 5'-phosphate is bound at residue 107 to 108 (GY). A substrate-binding site is contributed by His132. Pyridoxal 5'-phosphate-binding residues include Ser178, His206, and Thr233. An N6-(pyridoxal phosphate)lysine modification is found at Lys236. Residue Thr349 coordinates substrate.

It belongs to the class-II pyridoxal-phosphate-dependent aminotransferase family. BioF subfamily. In terms of assembly, homodimer. The cofactor is pyridoxal 5'-phosphate.

The enzyme catalyses 6-carboxyhexanoyl-[ACP] + L-alanine + H(+) = (8S)-8-amino-7-oxononanoate + holo-[ACP] + CO2. Its pathway is cofactor biosynthesis; biotin biosynthesis. Its function is as follows. Catalyzes the decarboxylative condensation of pimeloyl-[acyl-carrier protein] and L-alanine to produce 8-amino-7-oxononanoate (AON), [acyl-carrier protein], and carbon dioxide. The sequence is that of 8-amino-7-oxononanoate synthase from Chromobacterium violaceum (strain ATCC 12472 / DSM 30191 / JCM 1249 / CCUG 213 / NBRC 12614 / NCIMB 9131 / NCTC 9757 / MK).